Here is a 404-residue protein sequence, read N- to C-terminus: Subtilisin-like protease 3 (404 aa).

The first 20 residues, 1–20 (MLFSKSLVALVACFLPLIVS), serve as a signal peptide directing secretion. The propeptide occupies 21-114 (ATELKLRNAA…VDKDVKVSAY (94 aa)). The region spanning 38-112 (SYIVVYKDID…AYVDKDVKVS (75 aa)) is the Inhibitor I9 domain. The Peptidase S8 domain maps to 123–404 (PWGLDRISHR…DNLAYNDDGY (282 aa)). Asparagine 133 is a glycosylation site (N-linked (GlcNAc...) asparagine). Active-site charge relay system residues include aspartate 158 and histidine 190. Asparagine 243, asparagine 251, asparagine 286, asparagine 307, and asparagine 340 each carry an N-linked (GlcNAc...) asparagine glycan. Catalysis depends on serine 347, which acts as the Charge relay system. N-linked (GlcNAc...) asparagine glycosylation is present at asparagine 366.

This sequence belongs to the peptidase S8 family.

It is found in the secreted. Its function is as follows. Secreted subtilisin-like serine endopeptidase. Mediates the degradation of collagen, the major structural protein in the mammalian host. Degrades the nonhelical regions of collagen that function in the cross-linking of the helical components. May function as virulence factor involved in epidermal wing necrosis observed in white nose syndrome (WNS) in bats. The polypeptide is Subtilisin-like protease 3 (Pseudogymnoascus destructans (strain ATCC MYA-4855 / 20631-21) (Bat white-nose syndrome fungus)).